The primary structure comprises 506 residues: 2,3-bisphosphoglycerate-independent phosphoglycerate mutase (506 aa).

Positions 12 and 63 each coordinate Mn(2+). Catalysis depends on S63, which acts as the Phosphoserine intermediate. Substrate is bound by residues H122, 151 to 152, R182, R188, 253 to 256, and K323; these read RD and RADR. Mn(2+)-binding residues include D390, H394, D432, H433, and H451.

It belongs to the BPG-independent phosphoglycerate mutase family. As to quaternary structure, monomer. Mn(2+) is required as a cofactor.

The enzyme catalyses (2R)-2-phosphoglycerate = (2R)-3-phosphoglycerate. Its pathway is carbohydrate degradation; glycolysis; pyruvate from D-glyceraldehyde 3-phosphate: step 3/5. Catalyzes the interconversion of 2-phosphoglycerate and 3-phosphoglycerate. The polypeptide is 2,3-bisphosphoglycerate-independent phosphoglycerate mutase (Wolbachia pipientis wMel).